We begin with the raw amino-acid sequence, 250 residues long: Ferritin, chloroplastic (250 aa).

A chloroplast-targeting transit peptide spans 1 to 49 (MALAPSKVSTFSGFSPKPSVGGAQKNPTCSVSLSFLNEKLGSRNLRVCA). Residues 50 to 82 (STVPLTGVIFEPFEEVKKSELAVPTAPQVSLAR) form an extension peptide (EP) region. A Ferritin-like diiron domain is found at 83 to 236 (QNYADECESA…EYVAQLRRVG (154 aa)). The Fe cation site is built by E100, E135, H138, E184, and Q218.

This sequence belongs to the ferritin family. Oligomer of 24 subunits. There are two types of subunits: L (light) chain and H (heavy) chain. The major chain can be light or heavy, depending on the species and tissue type. The functional molecule forms a roughly spherical shell with a diameter of 12 nm and contains a central cavity into which the insoluble mineral iron core is deposited.

The protein resides in the plastid. Its subcellular location is the chloroplast. It carries out the reaction 4 Fe(2+) + O2 + 4 H(+) = 4 Fe(3+) + 2 H2O. Stores iron in a soluble, non-toxic, readily available form. Important for iron homeostasis. Has ferroxidase activity. Iron is taken up in the ferrous form and deposited as ferric hydroxides after oxidation. This Malus baccata var. xiaojinensis (Apple) protein is Ferritin, chloroplastic.